A 444-amino-acid chain; its full sequence is MPFIVNTDQDTREMLSVLGAASFDELIPDIPEEIRLKKALDLFPAMSEQEVKRLLEGLASSNTSTSDYVSYLGGGAYDHFIPSAIKTIVSRSEFYTAYTPYQAEVSQGTLQAIYEYQSLMCRLYDMDVANASMYDGATALAEAVLMAISVTGRQEVIVAGKLHPHYCEVLKTYLEAGGHSAVVQNTLENGVGTLDGLGALLTDRCAAVIVQQPNFYGSLEDVEAIGELAHSKGALFVVSADPVSLGLLAAPGSYGADIAVGEGQPLGNAQSFGGPYLGIFTVKQDLVRKIPGRLVGMTKDRNGDDGFILTLQTREQHIRREKATSNICTNQALNALHAAIYLSLLGKQGIIDVAEQSALKSHYLAEQIADIPGFSLKYSAPFFREFVVETPMAAREVISNLLEKKIFAGCDLSVYDEAGLLVAVTEKRTKAELDAFVEYLGALK.

The protein belongs to the GcvP family. N-terminal subunit subfamily. In terms of assembly, the glycine cleavage system is composed of four proteins: P, T, L and H. In this organism, the P 'protein' is a heterodimer of two subunits.

It catalyses the reaction N(6)-[(R)-lipoyl]-L-lysyl-[glycine-cleavage complex H protein] + glycine + H(+) = N(6)-[(R)-S(8)-aminomethyldihydrolipoyl]-L-lysyl-[glycine-cleavage complex H protein] + CO2. The glycine cleavage system catalyzes the degradation of glycine. The P protein binds the alpha-amino group of glycine through its pyridoxal phosphate cofactor; CO(2) is released and the remaining methylamine moiety is then transferred to the lipoamide cofactor of the H protein. This is Probable glycine dehydrogenase (decarboxylating) subunit 1 from Chlorobium phaeobacteroides (strain DSM 266 / SMG 266 / 2430).